Here is a 147-residue protein sequence, read N- to C-terminus: Secreted hemophore CSA2 (147 aa).

The signal sequence occupies residues 1–20 (MKFSTILAIPFAIAFANAAA). Residues 34–145 (NPYTIYPPVP…SALDAAATAT (112 aa)) form the CFEM domain. Intrachain disulfides connect cysteine 62–cysteine 102, cysteine 66–cysteine 97, cysteine 76–cysteine 83, and cysteine 85–cysteine 118. A heme-binding site is contributed by aspartate 80.

Belongs to the RBT5 family. As to quaternary structure, homodimer. The possibility of a transient honotrimer assembly of the holo protein is not ruled out.

It is found in the secreted. In terms of biological role, secreted heme-binding protein involved in the utilization of iron from human hemoglobin during hyphal growth. May also play a role in non-hemoglobin iron utilization. Heme transfer occurs between PGA7, RBT5 and CSA2 supporting a model in which the 3 CFEM proteins cooperate in a heme-acquisition system and form a cross-cell wall heme-transfer cascade. The ability to acquire iron from host tissues is a major virulence factor of pathogenic microorganisms. In Candida albicans (strain SC5314 / ATCC MYA-2876) (Yeast), this protein is Secreted hemophore CSA2 (CSA2).